The following is a 1463-amino-acid chain: DNA polymerase III PolC-type (1463 aa).

In terms of domain architecture, Exonuclease spans tyrosine 425–leucine 581.

This sequence belongs to the DNA polymerase type-C family. PolC subfamily.

It is found in the cytoplasm. It carries out the reaction DNA(n) + a 2'-deoxyribonucleoside 5'-triphosphate = DNA(n+1) + diphosphate. In terms of biological role, required for replicative DNA synthesis. This DNA polymerase also exhibits 3' to 5' exonuclease activity. This is DNA polymerase III PolC-type from Streptococcus pneumoniae serotype 2 (strain D39 / NCTC 7466).